Consider the following 875-residue polypeptide: Alanine--tRNA ligase (875 aa).

Positions 564, 568, 666, and 670 each coordinate Zn(2+).

This sequence belongs to the class-II aminoacyl-tRNA synthetase family. In terms of assembly, homotetramer. It depends on Zn(2+) as a cofactor.

The protein localises to the cytoplasm. The catalysed reaction is tRNA(Ala) + L-alanine + ATP = L-alanyl-tRNA(Ala) + AMP + diphosphate. Its function is as follows. Catalyzes the attachment of alanine to tRNA(Ala) in a two-step reaction: alanine is first activated by ATP to form Ala-AMP and then transferred to the acceptor end of tRNA(Ala). Also edits incorrectly charged Ser-tRNA(Ala) and Gly-tRNA(Ala) via its editing domain. The polypeptide is Alanine--tRNA ligase (Pectobacterium atrosepticum (strain SCRI 1043 / ATCC BAA-672) (Erwinia carotovora subsp. atroseptica)).